The primary structure comprises 134 residues: DNA-directed RNA polymerase subunit omega (134 aa).

The segment at 76 to 102 (EVDEPEPDPASMIAAGGAAAADSEEQD) is disordered.

The protein belongs to the RNA polymerase subunit omega family. As to quaternary structure, the RNAP catalytic core consists of 2 alpha, 1 beta, 1 beta' and 1 omega subunit. When a sigma factor is associated with the core the holoenzyme is formed, which can initiate transcription.

It carries out the reaction RNA(n) + a ribonucleoside 5'-triphosphate = RNA(n+1) + diphosphate. Functionally, promotes RNA polymerase assembly. Latches the N- and C-terminal regions of the beta' subunit thereby facilitating its interaction with the beta and alpha subunits. This is DNA-directed RNA polymerase subunit omega from Rhizobium etli (strain ATCC 51251 / DSM 11541 / JCM 21823 / NBRC 15573 / CFN 42).